A 354-amino-acid chain; its full sequence is Protein RecA (354 aa).

An ATP-binding site is contributed by 67-74; sequence GPESSGKT.

This sequence belongs to the RecA family.

The protein localises to the cytoplasm. In terms of biological role, can catalyze the hydrolysis of ATP in the presence of single-stranded DNA, the ATP-dependent uptake of single-stranded DNA by duplex DNA, and the ATP-dependent hybridization of homologous single-stranded DNAs. It interacts with LexA causing its activation and leading to its autocatalytic cleavage. This is Protein RecA from Hamiltonella defensa subsp. Acyrthosiphon pisum (strain 5AT).